The primary structure comprises 200 residues: Imidazoleglycerol-phosphate dehydratase (200 aa).

Belongs to the imidazoleglycerol-phosphate dehydratase family.

It is found in the cytoplasm. The catalysed reaction is D-erythro-1-(imidazol-4-yl)glycerol 3-phosphate = 3-(imidazol-4-yl)-2-oxopropyl phosphate + H2O. Its pathway is amino-acid biosynthesis; L-histidine biosynthesis; L-histidine from 5-phospho-alpha-D-ribose 1-diphosphate: step 6/9. The polypeptide is Imidazoleglycerol-phosphate dehydratase (Chlorobium limicola (strain DSM 245 / NBRC 103803 / 6330)).